The following is a 305-amino-acid chain: Carbamate kinase (305 aa).

The protein belongs to the carbamate kinase family.

The protein localises to the cytoplasm. The catalysed reaction is hydrogencarbonate + NH4(+) + ATP = carbamoyl phosphate + ADP + H2O + H(+). It participates in metabolic intermediate metabolism; carbamoyl phosphate degradation; CO(2) and NH(3) from carbamoyl phosphate: step 1/1. In Thermoplasma volcanium (strain ATCC 51530 / DSM 4299 / JCM 9571 / NBRC 15438 / GSS1), this protein is Carbamate kinase (arcC).